Consider the following 467-residue polypeptide: L-histidine transporter HutT (467 aa).

13 consecutive transmembrane segments (helical) span residues 18 to 38 (FMAL…SAIQ), 39 to 59 (MAGP…FMVM), 71 to 91 (VAGS…GFIL), 99 to 119 (MVIV…FWFP), 125 to 145 (IWVL…VKVF), 155 to 175 (LKVG…AFGF), 200 to 220 (VGGL…IEII), 245 to 265 (ILLF…WPQI), 280 to 300 (GIGS…ISAI), 334 to 354 (WMTV…NYLI), 358 to 378 (VFLL…LMIL), 402 to 422 (FWPY…GVLG), and 429 to 449 (AALI…LLWC).

It belongs to the amino acid-polyamine-organocation (APC) superfamily. Amino acid transporter (AAT) (TC 2.A.3.1) family.

The protein resides in the cell inner membrane. The enzyme catalyses L-histidine(out) + n H(+)(out) = L-histidine(in) + n H(+)(in). Its activity is regulated as follows. Transport activity is inhibited by the proton ionophores carbonyl cyanide m-chlorophenyl hydrazine (CCCP) and 2,4-dinitrophenol (DNP), but not by valinomycin, nigericin and nonactin. Uptake is reduced in the presence of the sulfhydryl reagent N-ethylmaleimide (NEM). Uptake is not affected by arginine, lysine, proline or compounds structurally related to histidine such as imidazole, 3-amino-1,2,4-triazole and urocanate. Only 1,2,4-triazolyl-3-alanine reduces the rate of L-histidine uptake significantly. In terms of biological role, major high-affinity histidine transporter. Binds and catalyzes the uptake of histidine into the cell. Functions as an histidine:proton symporter with high specificity for histidine. The protein is L-histidine transporter HutT of Pseudomonas putida (strain ATCC 47054 / DSM 6125 / CFBP 8728 / NCIMB 11950 / KT2440).